The primary structure comprises 132 residues: MADTMQFDLVSPERRLASVAASEVRLPGVEGDLTAMPGHAPVILSLRPGILTVVSAAGTAEYAVTGGFAEVSGEKVTVLAERGLTRAELTAAVHAEMLAEAKKVADAAHPSVADAAAKMLADMEALGSHINL.

It belongs to the ATPase epsilon chain family. F-type ATPases have 2 components, CF(1) - the catalytic core - and CF(0) - the membrane proton channel. CF(1) has five subunits: alpha(3), beta(3), gamma(1), delta(1), epsilon(1). CF(0) has four main subunits: a, b, b' and c.

It is found in the cellular chromatophore membrane. In terms of biological role, produces ATP from ADP in the presence of a proton gradient across the membrane. In Rhodobacter capsulatus (Rhodopseudomonas capsulata), this protein is ATP synthase epsilon chain (atpC).